The following is an 802-amino-acid chain: Vacuolar membrane protease (802 aa).

The Cytoplasmic segment spans residues 1 to 13 (MARYNPLAFTSGP). Residues 14-34 (VVFFITITYTALLIALLLTHL) traverse the membrane as a helical segment. The Vacuolar portion of the chain corresponds to 35-357 (TLPSYPSHPP…KVFIVFQLHT (323 aa)). N48, N102, N105, and N112 each carry an N-linked (GlcNAc...) asparagine glycan. The Zn(2+) site is built by H152 and D164. The active-site Proton acceptor is the E198. Residues E199, E224, and H297 each coordinate Zn(2+). Residues 358-378 (FFALCVTLLVVAPLTLIGLAW) traverse the membrane as a helical segment. Topologically, residues 379–389 (SLHKADRNYLF) are cytoplasmic. Residues 390–409 (ARKAFVYSADDDEPIHLYGW) traverse the membrane as a helical segment. Topologically, residues 410–423 (RGFFRFPIAFGIAT) are vacuolar. Residues 424-444 (SIVVGLAMMLSAWFAVSWFLL) traverse the membrane as a helical segment. The Cytoplasmic segment spans residues 445-457 (HGADAMRPSALQR). A helical membrane pass occupies residues 458 to 478 (MYSLLWLFIGSFCLLVFFTIL). Residues 479 to 490 (ANNHQVAAGYPS) are Vacuolar-facing. Residues 491–511 (LFCFATVFLANVLSFLELFLA) form a helical membrane-spanning segment. At 512–609 (PPKSAYAWNV…EQEWSGKLPS (98 aa)) the chain is on the cytoplasmic side. Disordered regions lie at residues 528–554 (GSRP…ATET) and 570–603 (AGRR…EQEW). The helical transmembrane segment at 610–630 (WIWIVQFSLLAPMIVILVGQI) threads the bilayer. Residues 631-649 (ALLLTSALYQTPSDGNSPL) lie on the Vacuolar side of the membrane. The chain crosses the membrane as a helical span at residues 650 to 670 (YIYTSIAALAVFLVAPIGPFI). Over 671–677 (HRFTHHV) the chain is Cytoplasmic. A helical membrane pass occupies residues 678–698 (PTFLFLLCVATTIYNLVAFPF). Residues 699-802 (SEQHKLKVYF…HDDSNNRGRR (104 aa)) lie on the Vacuolar side of the membrane. N-linked (GlcNAc...) asparagine glycosylation is found at N746 and N779.

This sequence belongs to the peptidase M28 family. Requires Zn(2+) as cofactor.

Its subcellular location is the vacuole membrane. In terms of biological role, may be involved in vacuolar sorting and osmoregulation. The polypeptide is Vacuolar membrane protease (Leptosphaeria maculans (strain JN3 / isolate v23.1.3 / race Av1-4-5-6-7-8) (Blackleg fungus)).